Consider the following 130-residue polypeptide: MVPKPHAKSAKKALRKKKVHLKFNVECKNPVEDGILRIEDLEAFLNEKIKVNGKTGHLAANNVKVEVAKSKVSVVSEVPFSKRYLKYLTKKYLKRNSLRDWLRVVAVNKNTYEVRYFHINDGEDAGSDHE.

The protein belongs to the eukaryotic ribosomal protein eL22 family.

This chain is Large ribosomal subunit protein eL22 (rpl-22), found in Caenorhabditis elegans.